Here is an 88-residue protein sequence, read N- to C-terminus: Small ribosomal subunit protein uS17 (88 aa).

Belongs to the universal ribosomal protein uS17 family. In terms of assembly, part of the 30S ribosomal subunit.

Functionally, one of the primary rRNA binding proteins, it binds specifically to the 5'-end of 16S ribosomal RNA. This is Small ribosomal subunit protein uS17 from Mycoplasmopsis agalactiae (strain NCTC 10123 / CIP 59.7 / PG2) (Mycoplasma agalactiae).